The primary structure comprises 199 residues: Prolactin-1 (199 aa).

3 disulfide bridges follow: C4–C11, C58–C174, and C191–C199. N60 carries N-linked (GlcNAc...) asparagine glycosylation.

The protein belongs to the somatotropin/prolactin family. In terms of processing, glycosylated.

Its subcellular location is the secreted. The polypeptide is Prolactin-1 (Alligator mississippiensis (American alligator)).